Consider the following 356-residue polypeptide: DNA polymerase IV (356 aa).

Positions 6 to 187 constitute a UmuC domain; sequence IIHIDMDAFY…QPIRRLHGVG (182 aa). The Mg(2+) site is built by Asp10 and Asp105. Glu106 is an active-site residue.

It belongs to the DNA polymerase type-Y family. As to quaternary structure, monomer. Mg(2+) serves as cofactor.

The protein localises to the cytoplasm. It catalyses the reaction DNA(n) + a 2'-deoxyribonucleoside 5'-triphosphate = DNA(n+1) + diphosphate. Its function is as follows. Poorly processive, error-prone DNA polymerase involved in untargeted mutagenesis. Copies undamaged DNA at stalled replication forks, which arise in vivo from mismatched or misaligned primer ends. These misaligned primers can be extended by PolIV. Exhibits no 3'-5' exonuclease (proofreading) activity. May be involved in translesional synthesis, in conjunction with the beta clamp from PolIII. This is DNA polymerase IV from Halorhodospira halophila (strain DSM 244 / SL1) (Ectothiorhodospira halophila (strain DSM 244 / SL1)).